Consider the following 284-residue polypeptide: Ribosomal RNA small subunit methyltransferase A (284 aa).

S-adenosyl-L-methionine is bound by residues Asn22, Leu24, Gly49, Glu70, Asp97, and Asn117.

Belongs to the class I-like SAM-binding methyltransferase superfamily. rRNA adenine N(6)-methyltransferase family. RsmA subfamily.

The protein localises to the cytoplasm. It carries out the reaction adenosine(1518)/adenosine(1519) in 16S rRNA + 4 S-adenosyl-L-methionine = N(6)-dimethyladenosine(1518)/N(6)-dimethyladenosine(1519) in 16S rRNA + 4 S-adenosyl-L-homocysteine + 4 H(+). Specifically dimethylates two adjacent adenosines (A1518 and A1519) in the loop of a conserved hairpin near the 3'-end of 16S rRNA in the 30S particle. May play a critical role in biogenesis of 30S subunits. This chain is Ribosomal RNA small subunit methyltransferase A, found in Desulforapulum autotrophicum (strain ATCC 43914 / DSM 3382 / VKM B-1955 / HRM2) (Desulfobacterium autotrophicum).